Reading from the N-terminus, the 692-residue chain is Methionine--tRNA ligase (692 aa).

A 'HIGH' region motif is present at residues 12–22 (PYANGSFHIGH). Cysteine 143, cysteine 146, cysteine 156, and cysteine 159 together coordinate Zn(2+). The 'KMSKS' region motif lies at 341 to 345 (KMSKS). Residue lysine 344 coordinates ATP. The region spanning 586–692 (DFAKIDLRIA…PGAQPGMRVR (107 aa)) is the tRNA-binding domain.

This sequence belongs to the class-I aminoacyl-tRNA synthetase family. MetG type 1 subfamily. Homodimer. Zn(2+) serves as cofactor.

It localises to the cytoplasm. It carries out the reaction tRNA(Met) + L-methionine + ATP = L-methionyl-tRNA(Met) + AMP + diphosphate. Is required not only for elongation of protein synthesis but also for the initiation of all mRNA translation through initiator tRNA(fMet) aminoacylation. The protein is Methionine--tRNA ligase of Bordetella pertussis (strain Tohama I / ATCC BAA-589 / NCTC 13251).